A 143-amino-acid chain; its full sequence is Small ribosomal subunit protein eS19y (143 aa).

Belongs to the eukaryotic ribosomal protein eS19 family.

The chain is Small ribosomal subunit protein eS19y (RPS19B) from Arabidopsis thaliana (Mouse-ear cress).